A 424-amino-acid chain; its full sequence is Cyclin-dependent kinase D-1 (424 aa).

Residues 19-299 (YLKREVLGEG…AQQALEHRYF (281 aa)) enclose the Protein kinase domain. Residues 25-33 (LGEGTYGVV) and K48 contribute to the ATP site. A Phosphothreonine modification is found at T29. Y30 is modified (phosphotyrosine). Catalysis depends on D141, which acts as the Proton acceptor. A Phosphoserine modification is found at S168. T174 carries the phosphothreonine modification. Disordered regions lie at residues 303–337 (PAPTKPSQLPRPPPKGDSGNNKIPDLNLQDGPVVL) and 359–424 (ADRT…GYTE). Residues 359 to 374 (ADRTEEHPSGARHMDD) are compositionally biased toward basic and acidic residues.

The protein belongs to the protein kinase superfamily. CMGC Ser/Thr protein kinase family. CDC2/CDKX subfamily. In terms of assembly, interacts with CYCH1-1. Expressed in actively dividing cells of roots, leaves and shoots. Expressed in the intercalary meristem and the elongation zone of internodes.

The protein resides in the nucleus. The catalysed reaction is L-seryl-[protein] + ATP = O-phospho-L-seryl-[protein] + ADP + H(+). The enzyme catalyses L-threonyl-[protein] + ATP = O-phospho-L-threonyl-[protein] + ADP + H(+). It carries out the reaction [DNA-directed RNA polymerase] + ATP = phospho-[DNA-directed RNA polymerase] + ADP + H(+). CDK-activating kinase that may control G1/S phase progression. May control the rate of cell differentiation to accomplish proper development of organs, or in response to a changing environment. Forms a complex with cyclin CYCH1-1 that phosphorylates CDKA-1 and the C-terminal domain (CTD) of the large subunit of RNA polymerase II. This Oryza sativa subsp. japonica (Rice) protein is Cyclin-dependent kinase D-1 (CDKD-1).